Consider the following 886-residue polypeptide: Alanine--tRNA ligase (886 aa).

4 residues coordinate Zn(2+): H564, H568, C666, and H670.

Belongs to the class-II aminoacyl-tRNA synthetase family. The cofactor is Zn(2+).

It localises to the cytoplasm. It carries out the reaction tRNA(Ala) + L-alanine + ATP = L-alanyl-tRNA(Ala) + AMP + diphosphate. In terms of biological role, catalyzes the attachment of alanine to tRNA(Ala) in a two-step reaction: alanine is first activated by ATP to form Ala-AMP and then transferred to the acceptor end of tRNA(Ala). Also edits incorrectly charged Ser-tRNA(Ala) and Gly-tRNA(Ala) via its editing domain. This is Alanine--tRNA ligase from Prochlorococcus marinus (strain MIT 9515).